The following is a 380-amino-acid chain: cAMP-dependent protein kinase type I-alpha regulatory subunit (380 aa).

Residue methionine 1 is modified to N-acetylmethionine. Residue alanine 2 is modified to N-acetylalanine; in cAMP-dependent protein kinase type I-alpha regulatory subunit, N-terminally processed. The interval alanine 2–valine 135 is dimerization and phosphorylation. Residues serine 3, serine 76, and serine 82 each carry the phosphoserine modification. Positions isoleucine 64 to arginine 96 are disordered. The short motif at arginine 95–isoleucine 99 is the Pseudophosphorylation motif element. A Phosphoserine modification is found at serine 100. 3',5'-cyclic AMP-binding positions include leucine 136–serine 253, glutamate 201, arginine 210, isoleucine 254–valine 380, glutamate 325, and arginine 334. Position 257 is a phosphoserine (serine 257).

This sequence belongs to the cAMP-dependent kinase regulatory chain family. As to quaternary structure, the inactive holoenzyme is composed of two regulatory chains and two catalytic chains. Activation by cAMP releases the two active catalytic monomers and the regulatory dimer. Interacts with PRKACA and PRKACB. PRKAR1A also interacts with RFC2; the complex may be involved in cell survival. Interacts with AKAP4. Interacts with RARA; the interaction occurs in the presence of cAMP or FSH and regulates RARA transcriptional activity. Interacts with the phosphorylated form of PJA2. Interacts with CBFA2T3. Interacts with PRKX; regulates this cAMP-dependent protein kinase. Interacts with smAKAP; this interaction may target PRKAR1A to the plasma membrane. Interacts with AICDA. In terms of processing, the pseudophosphorylation site binds to the substrate-binding region of the catalytic chain, resulting in the inhibition of its activity. As to expression, four types of regulatory chains are found: I-alpha, I-beta, II-alpha, and II-beta. Their expression varies among tissues and is in some cases constitutive and in others inducible.

The protein localises to the cell membrane. Its function is as follows. Regulatory subunit of the cAMP-dependent protein kinases involved in cAMP signaling in cells. The polypeptide is cAMP-dependent protein kinase type I-alpha regulatory subunit (PRKAR1A) (Sus scrofa (Pig)).